The primary structure comprises 144 residues: D-aminoacyl-tRNA deacylase (144 aa).

The Gly-cisPro motif, important for rejection of L-amino acids motif lies at 137-138; that stretch reads GP.

Belongs to the DTD family. Homodimer.

It is found in the cytoplasm. The catalysed reaction is glycyl-tRNA(Ala) + H2O = tRNA(Ala) + glycine + H(+). It catalyses the reaction a D-aminoacyl-tRNA + H2O = a tRNA + a D-alpha-amino acid + H(+). Its function is as follows. An aminoacyl-tRNA editing enzyme that deacylates mischarged D-aminoacyl-tRNAs. Also deacylates mischarged glycyl-tRNA(Ala), protecting cells against glycine mischarging by AlaRS. Acts via tRNA-based rather than protein-based catalysis; rejects L-amino acids rather than detecting D-amino acids in the active site. By recycling D-aminoacyl-tRNA to D-amino acids and free tRNA molecules, this enzyme counteracts the toxicity associated with the formation of D-aminoacyl-tRNA entities in vivo and helps enforce protein L-homochirality. This Acinetobacter baumannii (strain SDF) protein is D-aminoacyl-tRNA deacylase.